Reading from the N-terminus, the 231-residue chain is Octanoyltransferase (231 aa).

Positions 49-224 (ADTPDEIWLL…ALQRLLPPVY (176 aa)) constitute a BPL/LPL catalytic domain. Substrate is bound by residues 88 to 95 (RGGQITYH), 155 to 157 (ALG), and 168 to 170 (GLA). The active-site Acyl-thioester intermediate is Cys186.

This sequence belongs to the LipB family.

It is found in the cytoplasm. The catalysed reaction is octanoyl-[ACP] + L-lysyl-[protein] = N(6)-octanoyl-L-lysyl-[protein] + holo-[ACP] + H(+). Its pathway is protein modification; protein lipoylation via endogenous pathway; protein N(6)-(lipoyl)lysine from octanoyl-[acyl-carrier-protein]: step 1/2. Catalyzes the transfer of endogenously produced octanoic acid from octanoyl-acyl-carrier-protein onto the lipoyl domains of lipoate-dependent enzymes. Lipoyl-ACP can also act as a substrate although octanoyl-ACP is likely to be the physiological substrate. This is Octanoyltransferase from Aromatoleum aromaticum (strain DSM 19018 / LMG 30748 / EbN1) (Azoarcus sp. (strain EbN1)).